The primary structure comprises 429 residues: Adenylosuccinate synthetase (429 aa).

GTP contacts are provided by residues 12-18 (GDEGKGK) and 40-42 (GHT). The active-site Proton acceptor is Asp-13. Asp-13 and Gly-40 together coordinate Mg(2+). Residues 13–16 (DEGK), 38–41 (NAGH), Thr-129, Arg-143, Gln-223, Thr-238, and Arg-302 each bind IMP. Catalysis depends on His-41, which acts as the Proton donor. 298-304 (TVTGRKR) lines the substrate pocket. GTP is bound by residues Arg-304, 330–332 (KLD), and 412–414 (STS).

This sequence belongs to the adenylosuccinate synthetase family. As to quaternary structure, homodimer. Mg(2+) serves as cofactor.

It is found in the cytoplasm. It catalyses the reaction IMP + L-aspartate + GTP = N(6)-(1,2-dicarboxyethyl)-AMP + GDP + phosphate + 2 H(+). Its pathway is purine metabolism; AMP biosynthesis via de novo pathway; AMP from IMP: step 1/2. Its function is as follows. Plays an important role in the de novo pathway of purine nucleotide biosynthesis. Catalyzes the first committed step in the biosynthesis of AMP from IMP. This chain is Adenylosuccinate synthetase, found in Rhizorhabdus wittichii (strain DSM 6014 / CCUG 31198 / JCM 15750 / NBRC 105917 / EY 4224 / RW1) (Sphingomonas wittichii).